The primary structure comprises 235 residues: Aspartate/glutamate leucyltransferase (235 aa).

Belongs to the R-transferase family. Bpt subfamily.

Its subcellular location is the cytoplasm. The catalysed reaction is N-terminal L-glutamyl-[protein] + L-leucyl-tRNA(Leu) = N-terminal L-leucyl-L-glutamyl-[protein] + tRNA(Leu) + H(+). The enzyme catalyses N-terminal L-aspartyl-[protein] + L-leucyl-tRNA(Leu) = N-terminal L-leucyl-L-aspartyl-[protein] + tRNA(Leu) + H(+). Its function is as follows. Functions in the N-end rule pathway of protein degradation where it conjugates Leu from its aminoacyl-tRNA to the N-termini of proteins containing an N-terminal aspartate or glutamate. The chain is Aspartate/glutamate leucyltransferase from Pseudomonas putida (strain ATCC 47054 / DSM 6125 / CFBP 8728 / NCIMB 11950 / KT2440).